Here is a 445-residue protein sequence, read N- to C-terminus: Signal recognition particle 54 kDa protein (445 aa).

GTP-binding positions include Gly106–Thr113, Asp186–Arg190, and Thr244–Asp247.

It belongs to the GTP-binding SRP family. SRP54 subfamily. In terms of assembly, part of the signal recognition particle protein translocation system, which is composed of SRP and FtsY. Archaeal SRP consists of a 7S RNA molecule of 300 nucleotides and two protein subunits: SRP54 and SRP19.

It localises to the cytoplasm. The catalysed reaction is GTP + H2O = GDP + phosphate + H(+). Functionally, involved in targeting and insertion of nascent membrane proteins into the cytoplasmic membrane. Binds to the hydrophobic signal sequence of the ribosome-nascent chain (RNC) as it emerges from the ribosomes. The SRP-RNC complex is then targeted to the cytoplasmic membrane where it interacts with the SRP receptor FtsY. The chain is Signal recognition particle 54 kDa protein from Methanobrevibacter smithii (strain ATCC 35061 / DSM 861 / OCM 144 / PS).